Here is a 335-residue protein sequence, read N- to C-terminus: Phosphate acyltransferase (335 aa).

This sequence belongs to the PlsX family. As to quaternary structure, homodimer. Probably interacts with PlsY.

It is found in the cytoplasm. The enzyme catalyses a fatty acyl-[ACP] + phosphate = an acyl phosphate + holo-[ACP]. It functions in the pathway lipid metabolism; phospholipid metabolism. Catalyzes the reversible formation of acyl-phosphate (acyl-PO(4)) from acyl-[acyl-carrier-protein] (acyl-ACP). This enzyme utilizes acyl-ACP as fatty acyl donor, but not acyl-CoA. This chain is Phosphate acyltransferase, found in Streptococcus equi subsp. equi (strain 4047).